Reading from the N-terminus, the 118-residue chain is Non-specific lipid-transfer protein 1 (118 aa).

The N-terminal stretch at 1-25 (MAGVMKLACLLLACMIVAGPITSNA) is a signal peptide. Cystine bridges form between Cys-29-Cys-76, Cys-39-Cys-53, Cys-54-Cys-100, and Cys-74-Cys-114.

Belongs to the plant LTP family. In terms of tissue distribution, expressed primarily in epidermal cells.

The protein resides in the secreted. It localises to the cell wall. In terms of biological role, plant non-specific lipid-transfer proteins transfer phospholipids as well as galactolipids across membranes. May play a role in wax or cutin deposition in the cell walls of expanding epidermal cells and certain secretory tissues. This Arabidopsis thaliana (Mouse-ear cress) protein is Non-specific lipid-transfer protein 1 (LTP1).